Here is a 355-residue protein sequence, read N- to C-terminus: C-C chemokine receptor type 1 (355 aa).

Residues 1–34 (METPNTTEDYDTTTEFDYGDATPCQKVNERAFGA) are Extracellular-facing. An N-linked (GlcNAc...) asparagine glycan is attached at Asn5. Disulfide bonds link Cys24/Cys273 and Cys106/Cys183. The chain crosses the membrane as a helical span at residues 35-60 (QLLPPLYSLVFVIGLVGNILVVLVLV). Residues 61-64 (QYKR) are Cytoplasmic-facing. The chain crosses the membrane as a helical span at residues 65–91 (LKNMTSIYLLNLAISDLLFLFTLPFWI). Topologically, residues 92-107 (DYKLKDDWVFGDAMCK) are extracellular. Residues 108 to 129 (ILSGFYYTGLYSEIFFIILLTI) traverse the membrane as a helical segment. Residues 130 to 146 (DRYLAIVHAVFALRART) are Cytoplasmic-facing. Residues 147–171 (VTFGVITSIIIWALAILASMPGLYF) traverse the membrane as a helical segment. Residues 172-197 (SKTQWEFTHHTCSLHFPHESLREWKL) are Extracellular-facing. The helical transmembrane segment at 198–223 (FQALKLNLFGLVLPLLVMIICYTGII) threads the bilayer. Over 224–239 (KILLRRPNEKKSKAVR) the chain is Cytoplasmic. Residues 240–264 (LIFVIMIIFFLFWTPYNLTILISVF) traverse the membrane as a helical segment. The Extracellular portion of the chain corresponds to 265 to 281 (QDFLFTHECEQSRHLDL). Residues 282-305 (AVQVTEVIAYTHCCVNPVIYAFVG) traverse the membrane as a helical segment. Residues 306–355 (ERFRKYLRQLFHRRVAVHLVKWLPFLSVDRLERVSSTSPSTGEHELSAGF) are Cytoplasmic-facing.

The protein belongs to the G-protein coupled receptor 1 family. As to quaternary structure, interacts with CREB3. Interacts with CCL3. Interacts with CCL15. Interacts with CCL23. Interacts with GNAI1. Interacts with PF4/CXCL4. Widely expressed in different hematopoietic cells.

The protein localises to the cell membrane. Chemokine receptor that plays a crucial role in regulating immune cell migration, inflammation, and immune responses. Contributes to the inflammatory response by recruiting immune cells, such as monocytes, macrophages, T-cells, and dendritic cells, to sites of inflammation for the clearance of pathogens and the resolution of tissue damage. When activated by its ligands including CCL3, CCL5-9, CCL13-16 and CCL23, triggers a signaling cascade within immune cells, leading to their migration towards the source of the chemokine. For example, mediates neutrophil migration after activation by CCL3 leading to the sequential release of TNF-alpha and leukotriene B4. Also mediates monocyte migration upon CXCL4 binding. Activation by CCL5 results in neuroinflammation through the ERK1/2 signaling pathway. The chain is C-C chemokine receptor type 1 (CCR1) from Homo sapiens (Human).